Consider the following 343-residue polypeptide: Programmed cell death protein 2 (343 aa).

Residues Cys-134, Cys-137, Cys-145, Cys-148, Cys-154, His-158, His-167, and Cys-171 each coordinate Zn(2+). Residues 134 to 171 form an MYND-type; atypical zinc finger; the sequence is CRVCGCLAPMTCSRCKQAHYCSKEHQTLDWQLGHKQAC.

Ubiquitinated by PRKN, promoting proteasomal degradation.

Its subcellular location is the nucleus. In terms of biological role, may be a DNA-binding protein with a regulatory function. May play an important role in cell death and/or in regulation of cell proliferation. The protein is Programmed cell death protein 2 (Pdcd2) of Rattus norvegicus (Rat).